The following is a 280-amino-acid chain: Large ribosomal subunit protein uL2 (280 aa).

A disordered region spans residues 229-280; the sequence is DHPHGGGEGKAPIGHPSPLTPWGKPTLGYKTRKKRKPSDRFIIQRANDKKEK.

The protein belongs to the universal ribosomal protein uL2 family. In terms of assembly, part of the 50S ribosomal subunit. Forms a bridge to the 30S subunit in the 70S ribosome.

One of the primary rRNA binding proteins. Required for association of the 30S and 50S subunits to form the 70S ribosome, for tRNA binding and peptide bond formation. It has been suggested to have peptidyltransferase activity; this is somewhat controversial. Makes several contacts with the 16S rRNA in the 70S ribosome. The polypeptide is Large ribosomal subunit protein uL2 (Dictyoglomus turgidum (strain DSM 6724 / Z-1310)).